Here is a 90-residue protein sequence, read N- to C-terminus: N(2)-fixation sustaining protein CowN (90 aa).

It belongs to the CowN family.

Is required to sustain N(2)-dependent growth in the presence of low levels of carbon monoxide (CO). Probably acts by protecting the N(2) fixation ability of the nitrogenase complex, which is inactivated in the presence of CO. The polypeptide is N(2)-fixation sustaining protein CowN (Halorhodospira halophila (strain DSM 244 / SL1) (Ectothiorhodospira halophila (strain DSM 244 / SL1))).